A 473-amino-acid chain; its full sequence is Aspartyl/glutamyl-tRNA(Asn/Gln) amidotransferase subunit B (473 aa).

It belongs to the GatB/GatE family. GatB subfamily. As to quaternary structure, heterotrimer of A, B and C subunits.

The enzyme catalyses L-glutamyl-tRNA(Gln) + L-glutamine + ATP + H2O = L-glutaminyl-tRNA(Gln) + L-glutamate + ADP + phosphate + H(+). The catalysed reaction is L-aspartyl-tRNA(Asn) + L-glutamine + ATP + H2O = L-asparaginyl-tRNA(Asn) + L-glutamate + ADP + phosphate + 2 H(+). Functionally, allows the formation of correctly charged Asn-tRNA(Asn) or Gln-tRNA(Gln) through the transamidation of misacylated Asp-tRNA(Asn) or Glu-tRNA(Gln) in organisms which lack either or both of asparaginyl-tRNA or glutaminyl-tRNA synthetases. The reaction takes place in the presence of glutamine and ATP through an activated phospho-Asp-tRNA(Asn) or phospho-Glu-tRNA(Gln). The polypeptide is Aspartyl/glutamyl-tRNA(Asn/Gln) amidotransferase subunit B (Wolbachia sp. subsp. Drosophila simulans (strain wRi)).